Reading from the N-terminus, the 574-residue chain is R-linalool synthase, chloroplastic (574 aa).

The transit peptide at 1–40 directs the protein to the chloroplast; the sequence is MSCARITVTLPYRSAKTSIQRGITHCPALLRPRFSACTPL. Polar residues predominate over residues 52–61; sequence INGDNSPLKN. The segment at 52–71 is disordered; the sequence is INGDNSPLKNTHQHVEERSS. (2E)-geranyl diphosphate-binding residues include R287, D324, D328, R467, and D470. Positions 324 and 328 each coordinate Mg(2+). A DDXXD motif motif is present at residues 324-328; the sequence is DDIFD. 3 residues coordinate Mg(2+): D470, T474, and E478.

The protein belongs to the terpene synthase family. Tpsb subfamily. The cofactor is Mg(2+). Requires Mn(2+) as cofactor.

It is found in the plastid. Its subcellular location is the chloroplast. It carries out the reaction (2E)-geranyl diphosphate + H2O = (R)-linalool + diphosphate. The protein operates within secondary metabolite biosynthesis; terpenoid biosynthesis. Functionally, monoterpene synthase that catalyzes the formation of (3R)-linalool from geranyl diphosphate. This is R-linalool synthase, chloroplastic (LIS) from Ocimum basilicum (Sweet basil).